Consider the following 833-residue polypeptide: CUB domain-containing protein 1 (833 aa).

An N-terminal signal peptide occupies residues 1–29 (MAHSACGFSVALLGALLLGTARLLRGTEA). Over 30 to 666 (SEIALPQRSG…VTLTPRTVDL (637 aa)) the chain is Extracellular. N-linked (GlcNAc...) asparagine glycans are attached at residues Asn-122, Asn-180, Asn-205, Asn-270, Asn-310, Asn-342, and Asn-386. The CUB domain maps to 417-540 (CLDHRYCYRQ…QGLIVSYTPY (124 aa)). Cys-476 and Cys-499 are oxidised to a cystine. A helical transmembrane segment spans residues 667–687 (AVVIGAAGGGALLLFALVLII). At 688–833 (CFVKKKKKVD…HTQGPVETEE (146 aa)) the chain is on the cytoplasmic side. A Phosphotyrosine modification is found at Tyr-731. The disordered stretch occupies residues 783–833 (AKFTAEELAPSSPPESESEPYTFSHPNKGEIGVRETDIPLLHTQGPVETEE). Positions 809–819 (NKGEIGVRETD) are enriched in basic and acidic residues.

As to quaternary structure, interacts with CDH2/N-cadherin, CDH3/P-cadherin, SDC1/syndecan-1, SDC4/syndecan-4 and the serine protease ST14/MT-SP1. Also interacts SRC and PRKCG/protein kinase C gamma. Phosphorylated on tyrosine by kinases of the SRC family such as SRC and YES as well as by the protein kinase C gamma/PRKCG. Dephosphorylated by phosphotyrosine phosphatases. Also phosphorylated by suramin, a heparin analog. Tyrosine phosphorylated in response to dissociation of integrin alpha-6 beta-4 from laminin-5. Post-translationally, N-glycosylated. In terms of processing, a soluble form may also be produced by proteolytic cleavage at the cell surface (shedding). Another peptide of 80 kDa (p80) is present in cultured keratinocytes probably due to tryptic cleavage at an unidentified site on the N-terminal side. Converted to p80 by plasmin, a trypsin-like protease.

The protein localises to the cell membrane. In terms of biological role, may be involved in cell adhesion and cell matrix association. May play a role in the regulation of anchorage versus migration or proliferation versus differentiation via its phosphorylation. May be a novel marker for leukemia diagnosis and for immature hematopoietic stem cell subsets. Belongs to the tetraspanin web involved in tumor progression and metastasis. The sequence is that of CUB domain-containing protein 1 (Cdcp1) from Mus musculus (Mouse).